The primary structure comprises 319 residues: Inositol phosphoceramide mannosyltransferase 1 (319 aa).

Residues 8 to 28 (LLLKGIPICGVILLILWGYSL) traverse the membrane as a helical segment. N-linked (GlcNAc...) asparagine glycans are attached at residues asparagine 115 and asparagine 198. 2 helical membrane passes run 211 to 231 (PTVFLSAGPLFLSYQFCKYLL) and 279 to 299 (VLFFAFLAAFAILFLCLRVVF).

It belongs to the glycosyltransferase 32 family.

The protein localises to the golgi apparatus. The protein resides in the cis-Golgi network membrane. Its subcellular location is the trans-Golgi network membrane. Its function is as follows. With imt2 and imt3, is required for the synthesis of mannosyl phosphorylinositol ceramide (MIPC). Catalyzes the addition of mannosyl to phosphorylinositol ceramide (IPC). MIPC is essential for cell morphology, cell-surface distribution of ergosterol, localization for plasma-membrane transporters, and lipid-raft-mediated endocytosis of plasma membrane proteins to the vacuole. The polypeptide is Inositol phosphoceramide mannosyltransferase 1 (imt1) (Schizosaccharomyces pombe (strain 972 / ATCC 24843) (Fission yeast)).